The sequence spans 245 residues: Orotidine 5'-phosphate decarboxylase (245 aa).

Residues Asp22, Lys44, 71 to 80 (DLKFHDIPNT), Thr131, Arg192, Gln201, Gly221, and Arg222 contribute to the substrate site. The active-site Proton donor is Lys73.

Belongs to the OMP decarboxylase family. Type 1 subfamily. Homodimer.

The enzyme catalyses orotidine 5'-phosphate + H(+) = UMP + CO2. It participates in pyrimidine metabolism; UMP biosynthesis via de novo pathway; UMP from orotate: step 2/2. Functionally, catalyzes the decarboxylation of orotidine 5'-monophosphate (OMP) to uridine 5'-monophosphate (UMP). This is Orotidine 5'-phosphate decarboxylase from Salmonella gallinarum (strain 287/91 / NCTC 13346).